Reading from the N-terminus, the 405-residue chain is Diaminopimelate decarboxylase (405 aa).

Residue lysine 46 is modified to N6-(pyridoxal phosphate)lysine. Residues glycine 225 and 259–262 (EPGR) contribute to the pyridoxal 5'-phosphate site. 3 residues coordinate substrate: arginine 262, arginine 298, and tyrosine 302. Residue cysteine 329 is the Proton donor of the active site. The substrate site is built by glutamate 330 and tyrosine 358. Residue tyrosine 358 coordinates pyridoxal 5'-phosphate.

It belongs to the Orn/Lys/Arg decarboxylase class-II family. LysA subfamily. Homodimer. It depends on pyridoxal 5'-phosphate as a cofactor.

It catalyses the reaction meso-2,6-diaminopimelate + H(+) = L-lysine + CO2. It participates in amino-acid biosynthesis; L-lysine biosynthesis via DAP pathway; L-lysine from DL-2,6-diaminopimelate: step 1/1. Functionally, specifically catalyzes the decarboxylation of meso-diaminopimelate (meso-DAP) to L-lysine. This chain is Diaminopimelate decarboxylase, found in Helicobacter pylori (strain J99 / ATCC 700824) (Campylobacter pylori J99).